We begin with the raw amino-acid sequence, 565 residues long: Wee1-like protein kinase 2 (565 aa).

Disordered stretches follow at residues 18–78 (YCEE…KSPE) and 169–191 (KSNG…GNVE). Residues 19-29 (CEEESESEGQE) show a composition bias toward acidic residues. The span at 31 to 51 (WETRDAHSQIPDRAEGQESEA) shows a compositional bias: basic and acidic residues. Serine 76 bears the Phosphoserine mark. A Nuclear localization signal motif is present at residues 173–175 (KRK). A Protein kinase domain is found at 214–492 (FLEVEKIGVG…ARSRVLRPSL (279 aa)). Residues 220 to 228 (IGVGEFGTV) and lysine 243 each bind ATP. The Nuclear export signal motif lies at 317 to 331 (KLKDILLQISLGLKY). Catalysis depends on aspartate 341, which acts as the Proton acceptor. Mg(2+) contacts are provided by asparagine 346 and aspartate 382. Positions 495–521 (AEELQQQLNLEKFKTATLERELREAQQ) form a coiled coil. The interval 521–565 (QAWFSQEERGDAGVSGTPTGSRSTKRLVGGKSAKSSSFTWGKSSP) is disordered. Residues 553–565 (AKSSSFTWGKSSP) show a composition bias toward polar residues.

Belongs to the protein kinase superfamily. Ser/Thr protein kinase family. WEE1 subfamily. Post-translationally, phosphorylation leads to increase its activity.

The protein localises to the nucleus. It carries out the reaction L-tyrosyl-[protein] + ATP = O-phospho-L-tyrosyl-[protein] + ADP + H(+). In terms of biological role, oocyte-specific protein tyrosine kinase that phosphorylates and inhibits CDK1 and acts as a key regulator of meiosis during both prophase I and metaphase II. Required to maintain meiotic arrest in oocytes during the germinal vesicle (GV) stage, a long period of quiescence at dictyate prophase I, by phosphorylating CDK1 at 'Tyr-15', leading to inhibit CDK1 activity and prevent meiotic reentry. Also required for metaphase II exit during egg activation by phosphorylating CDK1 at 'Tyr-15', to ensure exit from meiosis in oocytes and promote pronuclear formation. The sequence is that of Wee1-like protein kinase 2 (WEE2) from Ailuropoda melanoleuca (Giant panda).